We begin with the raw amino-acid sequence, 253 residues long: Imidazole glycerol phosphate synthase subunit HisF (253 aa).

Catalysis depends on residues aspartate 11 and aspartate 130.

The protein belongs to the HisA/HisF family. As to quaternary structure, heterodimer of HisH and HisF.

Its subcellular location is the cytoplasm. The catalysed reaction is 5-[(5-phospho-1-deoxy-D-ribulos-1-ylimino)methylamino]-1-(5-phospho-beta-D-ribosyl)imidazole-4-carboxamide + L-glutamine = D-erythro-1-(imidazol-4-yl)glycerol 3-phosphate + 5-amino-1-(5-phospho-beta-D-ribosyl)imidazole-4-carboxamide + L-glutamate + H(+). It participates in amino-acid biosynthesis; L-histidine biosynthesis; L-histidine from 5-phospho-alpha-D-ribose 1-diphosphate: step 5/9. IGPS catalyzes the conversion of PRFAR and glutamine to IGP, AICAR and glutamate. The HisF subunit catalyzes the cyclization activity that produces IGP and AICAR from PRFAR using the ammonia provided by the HisH subunit. The polypeptide is Imidazole glycerol phosphate synthase subunit HisF (Caldanaerobacter subterraneus subsp. tengcongensis (strain DSM 15242 / JCM 11007 / NBRC 100824 / MB4) (Thermoanaerobacter tengcongensis)).